The primary structure comprises 142 residues: Large ribosomal subunit protein uL13 (142 aa).

This sequence belongs to the universal ribosomal protein uL13 family. Part of the 50S ribosomal subunit.

This protein is one of the early assembly proteins of the 50S ribosomal subunit, although it is not seen to bind rRNA by itself. It is important during the early stages of 50S assembly. The chain is Large ribosomal subunit protein uL13 from Vibrio vulnificus (strain CMCP6).